Reading from the N-terminus, the 356-residue chain is DNA polymerase IV (356 aa).

A UmuC domain is found at 7–188; it reads IIHIDMDCFY…LPLKKISGVG (182 aa). Aspartate 11 and aspartate 106 together coordinate Mg(2+). Glutamate 107 is an active-site residue.

This sequence belongs to the DNA polymerase type-Y family. In terms of assembly, monomer. Mg(2+) serves as cofactor.

Its subcellular location is the cytoplasm. It carries out the reaction DNA(n) + a 2'-deoxyribonucleoside 5'-triphosphate = DNA(n+1) + diphosphate. Functionally, poorly processive, error-prone DNA polymerase involved in untargeted mutagenesis. Copies undamaged DNA at stalled replication forks, which arise in vivo from mismatched or misaligned primer ends. These misaligned primers can be extended by PolIV. Exhibits no 3'-5' exonuclease (proofreading) activity. May be involved in translesional synthesis, in conjunction with the beta clamp from PolIII. This Glaesserella parasuis serovar 5 (strain SH0165) (Haemophilus parasuis) protein is DNA polymerase IV.